We begin with the raw amino-acid sequence, 139 residues long: Translation initiation factor 2 subunit beta (139 aa).

This sequence belongs to the eIF-2-beta/eIF-5 family. In terms of assembly, heterotrimer composed of an alpha, a beta and a gamma chain.

Functionally, eIF-2 functions in the early steps of protein synthesis by forming a ternary complex with GTP and initiator tRNA. This is Translation initiation factor 2 subunit beta from Saccharolobus islandicus (strain Y.N.15.51 / Yellowstone #2) (Sulfolobus islandicus).